The primary structure comprises 472 residues: Glutamate--tRNA ligase 2 (472 aa).

Positions 12-22 (PSPSGLLHLGN) match the 'HIGH' region motif. The 'KMSKS' region motif lies at 253–257 (PLSKR). ATP is bound at residue lysine 256.

Belongs to the class-I aminoacyl-tRNA synthetase family. Glutamate--tRNA ligase type 1 subfamily. Monomer.

The protein resides in the cytoplasm. It carries out the reaction tRNA(Glu) + L-glutamate + ATP = L-glutamyl-tRNA(Glu) + AMP + diphosphate. In terms of biological role, catalyzes the attachment of glutamate to tRNA(Glu) in a two-step reaction: glutamate is first activated by ATP to form Glu-AMP and then transferred to the acceptor end of tRNA(Glu). In Nitrosococcus oceani (strain ATCC 19707 / BCRC 17464 / JCM 30415 / NCIMB 11848 / C-107), this protein is Glutamate--tRNA ligase 2.